We begin with the raw amino-acid sequence, 412 residues long: Phytoene synthase, chloroplastic (412 aa).

Belongs to the phytoene/squalene synthase family. In terms of assembly, monomer. As to expression, expressed in roots, leaves, flower buds, sepals, petals, lips and lip crests.

The protein resides in the plastid. The protein localises to the chloroplast. It carries out the reaction 2 (2E,6E,10E)-geranylgeranyl diphosphate = 15-cis-phytoene + 2 diphosphate. Its pathway is carotenoid biosynthesis; phytoene biosynthesis; all-trans-phytoene from geranylgeranyl diphosphate: step 1/1. In terms of biological role, catalyzes the reaction from prephytoene diphosphate to phytoene. This chain is Phytoene synthase, chloroplastic (PSY), found in Oncidium hybrid cultivar (Orchid).